A 230-amino-acid polypeptide reads, in one-letter code: ATP synthase subunit a (230 aa).

6 helical membrane-spanning segments follow: residues 16-36, 73-93, 106-126, 142-162, 165-185, and 192-212; these read LVLFIPMTLTAVFLNLSWLSI, WVSAFTAIFILIFSINVLGLL, TYSIGVPLWMSVNILGFYLAF, LIPFMVIIETISLFAQPIALG, LAANLTAGHLLIFLLSTAIWT, and IASITLLIFFFLFLLEIGVAC.

It belongs to the ATPase A chain family. As to quaternary structure, F-type ATPases have 2 components, CF(1) - the catalytic core - and CF(0) - the membrane proton channel. CF(1) has five subunits: alpha(3), beta(3), gamma(1), delta(1), epsilon(1). CF(0) has three main subunits: a, b and c.

The protein resides in the mitochondrion inner membrane. Functionally, mitochondrial membrane ATP synthase (F(1)F(0) ATP synthase or Complex V) produces ATP from ADP in the presence of a proton gradient across the membrane which is generated by electron transport complexes of the respiratory chain. F-type ATPases consist of two structural domains, F(1) - containing the extramembraneous catalytic core and F(0) - containing the membrane proton channel, linked together by a central stalk and a peripheral stalk. During catalysis, ATP synthesis in the catalytic domain of F(1) is coupled via a rotary mechanism of the central stalk subunits to proton translocation. Key component of the proton channel; it may play a direct role in the translocation of protons across the membrane. The sequence is that of ATP synthase subunit a (ATP6) from Patiria pectinifera (Starfish).